The following is a 247-amino-acid chain: ATP synthase subunit a, chloroplastic (247 aa).

Transmembrane regions (helical) follow at residues 38 to 58 (QVLI…TLAV), 95 to 115 (VPFI…GALL), 134 to 154 (INTT…AGLS), 199 to 219 (LVVV…VMFL), and 220 to 240 (GLFT…AYIG).

It belongs to the ATPase A chain family. As to quaternary structure, F-type ATPases have 2 components, CF(1) - the catalytic core - and CF(0) - the membrane proton channel. CF(1) has five subunits: alpha(3), beta(3), gamma(1), delta(1), epsilon(1). CF(0) has four main subunits: a, b, b' and c.

It localises to the plastid. It is found in the chloroplast thylakoid membrane. Key component of the proton channel; it plays a direct role in the translocation of protons across the membrane. This is ATP synthase subunit a, chloroplastic from Lactuca sativa (Garden lettuce).